Here is a 242-residue protein sequence, read N- to C-terminus: Host range factor p28 (242 aa).

Residues 21–131 (YIDEPNDIRL…QSILRGLVNW (111 aa)) enclose the KilA-N domain. An RING-type zinc finger spans residues 173–226 (CGICYEVVYSKRLENDRYFGLLDSCNHIFCITCINIWHRTRRETGALDNCPICR).

It belongs to the orthopoxvirus OPG021 family.

The protein resides in the host cytoplasm. It carries out the reaction S-ubiquitinyl-[E2 ubiquitin-conjugating enzyme]-L-cysteine + [acceptor protein]-L-lysine = [E2 ubiquitin-conjugating enzyme]-L-cysteine + N(6)-ubiquitinyl-[acceptor protein]-L-lysine.. RING-finger E3 ubiquitin ligase which catalyzes the formation of both 'Lys-48'- and 'Lys-63'-linked polyubiquitin chains. Plays an important role in virulence by acting as an anti-apoptotic factor. This Cynomys gunnisoni (Gunnison's prairie dog) protein is Host range factor p28 (OPG021).